Here is a 152-residue protein sequence, read N- to C-terminus: Biogenesis of lysosome-related organelles complex 1 subunit 1 (152 aa).

The protein belongs to the BLOC1S1 family. In terms of assembly, component of the biogenesis of lysosome-related organelles complex-1 (BLOC-1). Interacts with BLOS2 and SNX1. In terms of tissue distribution, expressed in the whole plant (at protein level).

Its subcellular location is the cytoplasm. It is found in the endosome. In terms of biological role, component of the biogenesis of lysosome-related organelles complex-1 (BLOC-1), a complex that mediates the vacuolar degradative transport via the intracellular vesicle trafficking from the endosome to the vacuole. Probably regulates the PIN1 and PIN2 homeostasis through its interaction with SNX1. This Arabidopsis thaliana (Mouse-ear cress) protein is Biogenesis of lysosome-related organelles complex 1 subunit 1 (BLOS1).